The sequence spans 715 residues: ATP-dependent zinc metalloprotease YME1L1 (715 aa).

The interval 31–54 is disordered; it reads VSVNTSASPKQHRDTVAEHEAPSS. Basic and acidic residues predominate over residues 41–52; it reads QHRDTVAEHEAP. Residues 238-258 form a helical membrane-spanning segment; that stretch reads ILFVLLLFGIYGLLKNPFLSV. The ATP site is built by valine 283, threonine 325, glycine 326, lysine 327, threonine 328, and leucine 329. Residue histidine 541 coordinates Zn(2+). The active site involves glutamate 542. 2 residues coordinate Zn(2+): histidine 545 and aspartate 619.

The protein in the N-terminal section; belongs to the AAA ATPase family. This sequence in the C-terminal section; belongs to the peptidase M41 family. Homohexamer; may also form heterohexamers. Exists in several complexes of 600-1100 kDa. Interacts with AFG1L. The cofactor is Zn(2+). Post-translationally, proteolytically processed by mitochondrial processing peptidase (MPP) to generate the mature form. Degraded in an OMA1-dependent manner in response to oxidative stress.

The protein resides in the mitochondrion inner membrane. The protein localises to the mitochondrion. The enzyme catalyses ATP + H2O = ADP + phosphate + H(+). In terms of biological role, ATP-dependent metalloprotease that catalyzes the degradation of folded and unfolded proteins with a suitable degron sequence in the mitochondrial intermembrane region. Plays an important role in regulating mitochondrial morphology and function by cleaving OPA1 at position S2, giving rise to a form of OPA1 that promotes maintenance of normal mitochondrial structure and mitochondrial protein metabolism. Ensures cell proliferation, maintains normal cristae morphology and complex I respiration activity, promotes antiapoptotic activity and protects mitochondria from the accumulation of oxidatively damaged membrane proteins. Required to control the accumulation of nonassembled respiratory chain subunits (NDUFB6, OX4 and ND1). Involved in the mitochondrial adaptation in response to various signals, such as stress or developmental cues, by mediating degradation of mitochondrial proteins to rewire the mitochondrial proteome. Catalyzes degradation of mitochondrial proteins, such as translocases, lipid transfer proteins and metabolic enzymes in response to nutrient starvation in order to limit mitochondrial biogenesis: mechanistically, YME1L is activated by decreased phosphatidylethanolamine levels caused by LPIN1 activity in response to mTORC1 inhibition. Acts as a regulator of adult neural stem cell self-renewal by promoting mitochondrial proteome rewiring, preserving neural stem and progenitor cells self-renewal. Required for normal, constitutive degradation of PRELID1. Catalyzes the degradation of OMA1 in response to membrane depolarization. Mediates degradation of TIMM17A downstream of the integrated stress response (ISR). Catalyzes degradation of MICU1 when MICU1 is not assembled via an interchain disulfide. The chain is ATP-dependent zinc metalloprotease YME1L1 (Yme1l1) from Rattus norvegicus (Rat).